Reading from the N-terminus, the 196-residue chain is Pyridoxal 5'-phosphate synthase subunit PdxT (196 aa).

47-49 (GES) is an L-glutamine binding site. The Nucleophile role is filled by Cys79. L-glutamine contacts are provided by residues Arg106 and 134–135 (IR). Active-site charge relay system residues include His170 and Glu172.

Belongs to the glutaminase PdxT/SNO family. In the presence of PdxS, forms a dodecamer of heterodimers. Only shows activity in the heterodimer.

The catalysed reaction is aldehydo-D-ribose 5-phosphate + D-glyceraldehyde 3-phosphate + L-glutamine = pyridoxal 5'-phosphate + L-glutamate + phosphate + 3 H2O + H(+). It carries out the reaction L-glutamine + H2O = L-glutamate + NH4(+). Its pathway is cofactor biosynthesis; pyridoxal 5'-phosphate biosynthesis. Catalyzes the hydrolysis of glutamine to glutamate and ammonia as part of the biosynthesis of pyridoxal 5'-phosphate. The resulting ammonia molecule is channeled to the active site of PdxS. The protein is Pyridoxal 5'-phosphate synthase subunit PdxT of Bacillus subtilis (strain 168).